The chain runs to 69 residues: DNA gyrase inhibitor YacG (69 aa).

Residues Cys7, Cys10, Cys26, and Cys30 each coordinate Zn(2+).

The protein belongs to the DNA gyrase inhibitor YacG family. In terms of assembly, interacts with GyrB. Zn(2+) serves as cofactor.

Its function is as follows. Inhibits all the catalytic activities of DNA gyrase by preventing its interaction with DNA. Acts by binding directly to the C-terminal domain of GyrB, which probably disrupts DNA binding by the gyrase. The polypeptide is DNA gyrase inhibitor YacG (Shewanella sp. (strain ANA-3)).